The primary structure comprises 487 residues: Cobyric acid synthase (487 aa).

The GATase cobBQ-type domain occupies 249 to 435 (GIDIAIVRLP…IHGIFDEGDF (187 aa)). Cys330 functions as the Nucleophile in the catalytic mechanism. His427 is an active-site residue.

The protein belongs to the CobB/CobQ family. CobQ subfamily.

It functions in the pathway cofactor biosynthesis; adenosylcobalamin biosynthesis. In terms of biological role, catalyzes amidations at positions B, D, E, and G on adenosylcobyrinic A,C-diamide. NH(2) groups are provided by glutamine, and one molecule of ATP is hydrogenolyzed for each amidation. This is Cobyric acid synthase from Clostridium perfringens (strain ATCC 13124 / DSM 756 / JCM 1290 / NCIMB 6125 / NCTC 8237 / Type A).